Reading from the N-terminus, the 243-residue chain is Peptidyl-tRNA hydrolase (243 aa).

Residue Y14 participates in tRNA binding. The active-site Proton acceptor is H19. Residues F64, N66, and N112 each contribute to the tRNA site. Residues 190–205 (KAEEEKPAKEMKDAGK) are compositionally biased toward basic and acidic residues. The disordered stretch occupies residues 190–243 (KAEEEKPAKEMKDAGKKPASQSHIHQARNHNQPKLPATGPMADMLKKMFGKKGD). The span at 208-221 (ASQSHIHQARNHNQ) shows a compositional bias: polar residues.

It belongs to the PTH family. Monomer.

The protein localises to the cytoplasm. The catalysed reaction is an N-acyl-L-alpha-aminoacyl-tRNA + H2O = an N-acyl-L-amino acid + a tRNA + H(+). Functionally, hydrolyzes ribosome-free peptidyl-tRNAs (with 1 or more amino acids incorporated), which drop off the ribosome during protein synthesis, or as a result of ribosome stalling. Its function is as follows. Catalyzes the release of premature peptidyl moieties from peptidyl-tRNA molecules trapped in stalled 50S ribosomal subunits, and thus maintains levels of free tRNAs and 50S ribosomes. This is Peptidyl-tRNA hydrolase from Rhizobium johnstonii (strain DSM 114642 / LMG 32736 / 3841) (Rhizobium leguminosarum bv. viciae).